Reading from the N-terminus, the 455-residue chain is Transcription factor mokH (455 aa).

The tract at residues 1-22 is disordered; it reads MALSPVQDPPSHTDKTMPRRAF. The zn(2)-C6 fungal-type DNA-binding region spans 26–58; the sequence is CDRCHAQKIKCIGSEGAVARASCQRCQQAGLRC. 2 disordered regions span residues 68 to 113 and 296 to 317; these read KLPK…DSSG and LTPL…RSSV. Polar residues predominate over residues 75–88; that stretch reads AESSPASSTAGLHT. Over residues 89-113 the composition is skewed to low complexity; the sequence is SSSDSSPPVPSDGLPLDLPGPDSSG.

It localises to the nucleus. Transcription factor that regulates the gene cluster that mediates the biosynthesis of monakolin K, also known as lovastatin, and which acts as a potent competitive inhibitor of HMG-CoA reductase. Monakolin K biosynthesis is performed in two stages. The first stage is catalyzed by the nonaketide synthase mokA, which belongs to type I polyketide synthases and catalyzes the iterative nine-step formation of the polyketide. This PKS stage is completed by the action of dehydrogenase mokE, which catalyzes the NADPH-dependent reduction of the unsaturated tetra-, penta- and heptaketide intermediates that arise during the mokA-mediated biosynthesis of the nonaketide chain and leads to dihydromonacolin L. Covalently bound dihydromonacolin L is released from mokA by the mokD esterase. Conversion of dihydromonacolin L into monacolin L and then monacolin J is subsequently performed with the participation of molecular oxygen and P450 monoogygenase mokC. Finally, mokF performs the conversion of monacoline J to monacoline K through the addition of the side-chain diketide moiety (2R)-2-methylbutanoate produced by the diketide synthase mokB. HMG-CoA reductase mokG may act as a down-regulator of monacolin K production. The chain is Transcription factor mokH from Monascus pilosus (Red mold).